We begin with the raw amino-acid sequence, 245 residues long: Tetraspanin-6 (245 aa).

Residues 1 to 19 lie on the Cytoplasmic side of the membrane; it reads MASPSRRLQTKPVITCLKS. A helical transmembrane segment spans residues 20–40; the sequence is VLLIYTFIFWITGVILLAVGI. Over 41–59 the chain is Extracellular; it reads WGKVSLENYFSLLNEKATN. A helical membrane pass occupies residues 60-80; that stretch reads VPFVLIGTGTVIILLGTFGCF. Topologically, residues 81–93 are cytoplasmic; it reads ATCRTSAWMLKLY. The chain crosses the membrane as a helical span at residues 94–114; that stretch reads AMFLTLIFLVELVAAIVGFVF. Over 115-208 the chain is Extracellular; that stretch reads RHEIKNSFKS…IKVMTTIESE (94 aa). Asn134 carries N-linked (GlcNAc...) asparagine glycosylation. A helical membrane pass occupies residues 209–229; sequence MGVVAGISFGVACFQLIGIFL. Over 230-245 the chain is Cytoplasmic; that stretch reads AYCLSRAITNNQYEIV.

The protein belongs to the tetraspanin (TM4SF) family.

Its subcellular location is the membrane. This is Tetraspanin-6 (Tspan6) from Mus musculus (Mouse).